Consider the following 570-residue polypeptide: Peptidyl-prolyl cis-trans isomerase-like 2 (570 aa).

One can recognise a U-box domain in the interval 37–110 (KRLPFNFCSL…GDYVDPVTYK (74 aa)). 3 disordered regions span residues 215–253 (RSER…KPTP), 428–449 (STTL…PTPD), and 469–570 (KKAE…SSWD). Residues 234–248 (STTTSTQSKTASFQS) are compositionally biased toward low complexity. Positions 298–457 (QKGYARISTT…PDIRITDVTI (160 aa)) constitute a PPIase cyclophilin-type domain. Positions 428–446 (STTLNNLETHPVNSSTNRP) are enriched in polar residues. The segment covering 469–483 (KKAEEASGKNKKVDP) has biased composition (basic and acidic residues). Acidic residues-rich tracts occupy residues 484 to 497 (TEED…DDDQ) and 535 to 550 (QEED…EPEP).

It belongs to the cyclophilin-type PPIase family. PPIL2 subfamily.

It is found in the nucleus. It catalyses the reaction [protein]-peptidylproline (omega=180) = [protein]-peptidylproline (omega=0). It carries out the reaction S-ubiquitinyl-[E2 ubiquitin-conjugating enzyme]-L-cysteine + [acceptor protein]-L-lysine = [E2 ubiquitin-conjugating enzyme]-L-cysteine + N(6)-ubiquitinyl-[acceptor protein]-L-lysine.. Its function is as follows. May catalyze the cis-trans isomerization of proline imidic peptide bonds in oligopeptides thereby assisting the folding of proteins. May also function as a chaperone, playing a role in intracellular transport of proteins. May also have a protein ubiquitin ligase activity acting as an E3 ubiquitin protein ligase or as a ubiquitin-ubiquitin ligase promoting elongation of ubiquitin chains on proteins. This Aspergillus oryzae (strain ATCC 42149 / RIB 40) (Yellow koji mold) protein is Peptidyl-prolyl cis-trans isomerase-like 2 (cyp8).